Consider the following 311-residue polypeptide: Aspartate carbamoyltransferase catalytic subunit (311 aa).

2 residues coordinate carbamoyl phosphate: R55 and T56. K85 is a binding site for L-aspartate. The carbamoyl phosphate site is built by R106, H135, and Q138. The L-aspartate site is built by R168 and R230. Carbamoyl phosphate contacts are provided by L268 and P269.

Belongs to the aspartate/ornithine carbamoyltransferase superfamily. ATCase family. In terms of assembly, heterododecamer (2C3:3R2) of six catalytic PyrB chains organized as two trimers (C3), and six regulatory PyrI chains organized as three dimers (R2).

It carries out the reaction carbamoyl phosphate + L-aspartate = N-carbamoyl-L-aspartate + phosphate + H(+). It participates in pyrimidine metabolism; UMP biosynthesis via de novo pathway; (S)-dihydroorotate from bicarbonate: step 2/3. Catalyzes the condensation of carbamoyl phosphate and aspartate to form carbamoyl aspartate and inorganic phosphate, the committed step in the de novo pyrimidine nucleotide biosynthesis pathway. The polypeptide is Aspartate carbamoyltransferase catalytic subunit (Klebsiella pneumoniae subsp. pneumoniae (strain ATCC 700721 / MGH 78578)).